A 70-amino-acid chain; its full sequence is MPKQLMEIKDFLIKARRKDAKSCKIKKNPDNTKFKLRCSRFLYTLVITDSEKAEKLKKSLPPGLQVKELK.

The protein belongs to the eukaryotic ribosomal protein eL38 family.

This is Large ribosomal subunit protein eL38 (RPL38) from Artemia franciscana (Brine shrimp).